A 164-amino-acid polypeptide reads, in one-letter code: UPF0251 protein MM_1448 (164 aa).

Residues 91–100 (GDYRMPRGDR) show a composition bias toward basic and acidic residues. The tract at residues 91–123 (GDYRMPRGDRTGPAGQGPAGGGRGRGQGKGRGG) is disordered. A compositionally biased stretch (gly residues) spans 104–115 (AGQGPAGGGRGR).

It belongs to the UPF0251 family.

This Methanosarcina mazei (strain ATCC BAA-159 / DSM 3647 / Goe1 / Go1 / JCM 11833 / OCM 88) (Methanosarcina frisia) protein is UPF0251 protein MM_1448.